Reading from the N-terminus, the 157-residue chain is Cytochrome b6-f complex subunit 4 (157 aa).

3 helical membrane passes run 35-55 (ILYI…GLGV), 94-114 (LVGV…AFIE), and 130-150 (LVYL…VLGI).

The protein belongs to the cytochrome b family. PetD subfamily. The 4 large subunits of the cytochrome b6-f complex are cytochrome b6, subunit IV (17 kDa polypeptide, petD), cytochrome f and the Rieske protein, while the 4 small subunits are petG, petL, petM and petN. The complex functions as a dimer.

It is found in the plastid. The protein localises to the chloroplast thylakoid membrane. In terms of biological role, component of the cytochrome b6-f complex, which mediates electron transfer between photosystem II (PSII) and photosystem I (PSI), cyclic electron flow around PSI, and state transitions. This chain is Cytochrome b6-f complex subunit 4, found in Amphidinium carterae (Dinoflagellate).